The following is a 154-amino-acid chain: 6,7-dimethyl-8-ribityllumazine synthase (154 aa).

Residues F23, 57 to 59, and 81 to 83 contribute to the 5-amino-6-(D-ribitylamino)uracil site; these read AFE and AVI. Residue 86-87 participates in (2S)-2-hydroxy-3-oxobutyl phosphate binding; the sequence is ST. The active-site Proton donor is H89. 5-amino-6-(D-ribitylamino)uracil is bound at residue F114. (2S)-2-hydroxy-3-oxobutyl phosphate is bound at residue R128.

Belongs to the DMRL synthase family.

It carries out the reaction (2S)-2-hydroxy-3-oxobutyl phosphate + 5-amino-6-(D-ribitylamino)uracil = 6,7-dimethyl-8-(1-D-ribityl)lumazine + phosphate + 2 H2O + H(+). It participates in cofactor biosynthesis; riboflavin biosynthesis; riboflavin from 2-hydroxy-3-oxobutyl phosphate and 5-amino-6-(D-ribitylamino)uracil: step 1/2. Functionally, catalyzes the formation of 6,7-dimethyl-8-ribityllumazine by condensation of 5-amino-6-(D-ribitylamino)uracil with 3,4-dihydroxy-2-butanone 4-phosphate. This is the penultimate step in the biosynthesis of riboflavin. The protein is 6,7-dimethyl-8-ribityllumazine synthase of Syntrophotalea carbinolica (strain DSM 2380 / NBRC 103641 / GraBd1) (Pelobacter carbinolicus).